The following is a 328-amino-acid chain: Malate dehydrogenase (328 aa).

11–17 (GAAGQIG) is a binding site for NAD(+). 2 residues coordinate substrate: R92 and R98. NAD(+)-binding positions include N105, Q112, and 129–131 (VGN). Positions 131 and 162 each coordinate substrate. The active-site Proton acceptor is H187.

Belongs to the LDH/MDH superfamily. MDH type 2 family.

The catalysed reaction is (S)-malate + NAD(+) = oxaloacetate + NADH + H(+). Catalyzes the reversible oxidation of malate to oxaloacetate. The sequence is that of Malate dehydrogenase from Coxiella burnetii (strain RSA 493 / Nine Mile phase I).